The primary structure comprises 326 residues: E3 ubiquitin-protein ligase SINAT3 (326 aa).

The disordered stretch occupies residues 1–44 (MDLDSMDCTSTMDVTDDEEIHQDRHSYASVSKHHHTNNNTTNVN). The RING-type zinc finger occupies 63 to 99 (CPVCTNSMYPPIHQCHNGHTLCSTCKARVHNRCPTCR). An SBD region spans residues 113–306 (VAESLELPCK…KELKLRVTGR (194 aa)). An SIAH-type zinc finger spans residues 116-176 (SLELPCKHMS…LVAHLRDDHK (61 aa)). Zn(2+) contacts are provided by Cys121, Cys128, His140, Cys144, Cys151, Cys158, His170, and His175.

This sequence belongs to the SINA (Seven in absentia) family. As to quaternary structure, interacts with SINAT6. Interacts with WAV3. Interacts with FREE1. Interacts with ELC/VPS23A.

It localises to the endosome. The protein resides in the multivesicular body. The protein localises to the cytoplasmic vesicle. It is found in the autophagosome. It carries out the reaction S-ubiquitinyl-[E2 ubiquitin-conjugating enzyme]-L-cysteine + [acceptor protein]-L-lysine = [E2 ubiquitin-conjugating enzyme]-L-cysteine + N(6)-ubiquitinyl-[acceptor protein]-L-lysine.. The protein operates within protein modification; protein ubiquitination. In terms of biological role, E3 ubiquitin-protein ligase that mediates ubiquitination and subsequent proteasomal degradation of target proteins. E3 ubiquitin ligases accept ubiquitin from an E2 ubiquitin-conjugating enzyme in the form of a thioester and then directly transfers the ubiquitin to targeted substrates. It probably triggers the ubiquitin-mediated degradation of different substrates. Modulates directly the ubiquitination and proteasomal-dependent degradation of FREE1, a component of the ESCRT-I complex. Modulates directly the ubiquitination and proteasomal-dependent degradation of ELC/VPS23A, a component of the ESCRT-I complex. In Arabidopsis thaliana (Mouse-ear cress), this protein is E3 ubiquitin-protein ligase SINAT3.